The following is a 273-amino-acid chain: Putative phosphoenolpyruvate synthase regulatory protein (273 aa).

Position 153 to 160 (Ala-153 to Thr-160) interacts with ADP.

The protein belongs to the pyruvate, phosphate/water dikinase regulatory protein family. PSRP subfamily.

It catalyses the reaction [pyruvate, water dikinase] + ADP = [pyruvate, water dikinase]-phosphate + AMP + H(+). The catalysed reaction is [pyruvate, water dikinase]-phosphate + phosphate + H(+) = [pyruvate, water dikinase] + diphosphate. Bifunctional serine/threonine kinase and phosphorylase involved in the regulation of the phosphoenolpyruvate synthase (PEPS) by catalyzing its phosphorylation/dephosphorylation. The chain is Putative phosphoenolpyruvate synthase regulatory protein from Xanthomonas oryzae pv. oryzae (strain MAFF 311018).